Reading from the N-terminus, the 2319-residue chain is Neurogenic locus notch homolog protein 3 (2319 aa).

Basic residues predominate over residues methionine 1–leucine 14. Positions methionine 1–proline 20 are disordered. The N-terminal stretch at methionine 1–alanine 40 is a signal peptide. 3 consecutive EGF-like domains span residues alanine 41 to glutamine 79, leucine 80 to serine 120, and leucine 121 to arginine 158. At alanine 41 to leucine 1645 the chain is on the extracellular side. 99 disulfide bridges follow: cysteine 44/cysteine 56, cysteine 50/cysteine 67, cysteine 69/cysteine 78, cysteine 84/cysteine 95, cysteine 89/cysteine 108, cysteine 110/cysteine 119, cysteine 125/cysteine 136, cysteine 130/cysteine 146, cysteine 148/cysteine 157, cysteine 164/cysteine 176, cysteine 170/cysteine 185, cysteine 187/cysteine 196, cysteine 203/cysteine 214, cysteine 208/cysteine 224, cysteine 226/cysteine 235, cysteine 242/cysteine 253, cysteine 247/cysteine 262, cysteine 264/cysteine 273, cysteine 280/cysteine 293, cysteine 287/cysteine 302, cysteine 304/cysteine 313, cysteine 320/cysteine 331, cysteine 325/cysteine 340, cysteine 342/cysteine 351, cysteine 357/cysteine 368, cysteine 362/cysteine 379, cysteine 381/cysteine 390, cysteine 397/cysteine 410, cysteine 404/cysteine 419, cysteine 421/cysteine 430, cysteine 437/cysteine 448, cysteine 442/cysteine 457, cysteine 459/cysteine 468, cysteine 475/cysteine 486, cysteine 480/cysteine 495, cysteine 497/cysteine 506, cysteine 513/cysteine 524, cysteine 518/cysteine 533, cysteine 535/cysteine 544, cysteine 551/cysteine 561, cysteine 556/cysteine 570, cysteine 572/cysteine 581, cysteine 588/cysteine 599, cysteine 593/cysteine 608, cysteine 610/cysteine 619, cysteine 626/cysteine 636, cysteine 631/cysteine 645, cysteine 647/cysteine 656, cysteine 663/cysteine 674, cysteine 668/cysteine 683, cysteine 685/cysteine 694, cysteine 701/cysteine 711, cysteine 706/cysteine 720, cysteine 722/cysteine 731, cysteine 740/cysteine 751, cysteine 745/cysteine 760, cysteine 762/cysteine 771, cysteine 777/cysteine 788, cysteine 782/cysteine 798, cysteine 800/cysteine 809, cysteine 816/cysteine 828, cysteine 822/cysteine 837, cysteine 839/cysteine 848, cysteine 855/cysteine 866, cysteine 860/cysteine 875, cysteine 877/cysteine 886, cysteine 893/cysteine 903, cysteine 898/cysteine 912, cysteine 914/cysteine 923, cysteine 930/cysteine 941, cysteine 935/cysteine 950, cysteine 952/cysteine 961, cysteine 968/cysteine 979, cysteine 973/cysteine 988, cysteine 990/cysteine 999, cysteine 1006/cysteine 1017, cysteine 1011/cysteine 1024, cysteine 1026/cysteine 1035, cysteine 1042/cysteine 1063, cysteine 1057/cysteine 1072, cysteine 1074/cysteine 1083, cysteine 1090/cysteine 1101, cysteine 1095/cysteine 1110, cysteine 1112/cysteine 1121, cysteine 1128/cysteine 1139, cysteine 1133/cysteine 1148, cysteine 1150/cysteine 1159, cysteine 1166/cysteine 1184, cysteine 1178/cysteine 1193, cysteine 1195/cysteine 1204, cysteine 1211/cysteine 1224, cysteine 1216/cysteine 1234, cysteine 1236/cysteine 1245, cysteine 1252/cysteine 1263, cysteine 1257/cysteine 1277, cysteine 1279/cysteine 1288, cysteine 1295/cysteine 1306, cysteine 1300/cysteine 1315, and cysteine 1317/cysteine 1326. One can recognise an EGF-like 4; calcium-binding domain in the interval aspartate 160–glutamate 197. The region spanning proline 199 to glutamate 236 is the EGF-like 5 domain. Positions asparagine 238–threonine 274 constitute an EGF-like 6; calcium-binding domain. Residues aspartate 276 to serine 314 form the EGF-like 7 domain. One can recognise an EGF-like 8; calcium-binding domain in the interval asparagine 316–histidine 352. Residues leucine 353–aspartate 391 enclose the EGF-like 9 domain. The region spanning aspartate 393–glutamate 431 is the EGF-like 10; calcium-binding domain. Positions aspartate 433 to glutamate 469 constitute an EGF-like 11; calcium-binding domain. The EGF-like 12; calcium-binding domain maps to aspartate 471 to glutamine 507. Residues aspartate 509 to glutamate 545 form the EGF-like 13; calcium-binding domain. Residues asparagine 547–glutamate 582 enclose the EGF-like 14; calcium-binding domain. Positions glutamine 584–glutamate 620 constitute an EGF-like 15; calcium-binding domain. The EGF-like 16; calcium-binding domain maps to asparagine 622 to asparagine 657. Residues glutamate 659 to leucine 695 enclose the EGF-like 17; calcium-binding domain. EGF-like domains follow at residues alanine 697–serine 732, alanine 736–glutamate 772, and valine 773–glutamine 810. The 38-residue stretch at aspartate 812–aspartate 849 folds into the EGF-like 21; calcium-binding domain. In terms of domain architecture, EGF-like 22; calcium-binding spans aspartate 851–alanine 887. An EGF-like 23; calcium-binding domain is found at aspartate 889–glutamate 924. EGF-like domains lie at aspartate 926–glutamine 962, lysine 964–glutamine 1000, proline 1002–aspartate 1036, proline 1038–glutamate 1084, and glutamate 1086–glutamate 1122. Residues aspartate 1124–glutamate 1160 form the EGF-like 29; calcium-binding domain. One can recognise an EGF-like 30; calcium-binding domain in the interval asparagine 1162–glutamate 1205. N-linked (GlcNAc...) asparagine glycosylation is present at asparagine 1181. 4 EGF-like domains span residues aspartate 1207–glutamine 1246, alanine 1248–glutamate 1289, valine 1291–arginine 1327, and threonine 1337–glutamate 1375. Residue asparagine 1338 is glycosylated (N-linked (GlcNAc...) asparagine). Disulfide bonds link cysteine 1341-cysteine 1352, cysteine 1346-cysteine 1363, cysteine 1365-cysteine 1374, cysteine 1389-cysteine 1412, cysteine 1394-cysteine 1407, cysteine 1403-cysteine 1419, cysteine 1430-cysteine 1453, cysteine 1435-cysteine 1448, cysteine 1444-cysteine 1460, cysteine 1469-cysteine 1495, cysteine 1477-cysteine 1490, and cysteine 1486-cysteine 1502. 3 LNR repeats span residues cysteine 1389–glutamine 1429, cysteine 1430–arginine 1467, and cysteine 1469–proline 1507. Asparagine 1440 is a glycosylation site (N-linked (GlcNAc...) asparagine). A helical transmembrane segment spans residues leucine 1646 to valine 1666. At alanine 1667 to alanine 2319 the chain is on the cytoplasmic side. ANK repeat units follow at residues threonine 1840–alanine 1869, serine 1873–alanine 1903, aspartate 1907–alanine 1936, leucine 1940–methionine 1969, and lysine 1973–isoleucine 2002. Disordered stretches follow at residues leucine 2026–cysteine 2046 and glutamine 2059–tyrosine 2129. Residues proline 2029–cysteine 2046 show a composition bias toward low complexity. The residue at position 2175 (arginine 2175) is an Omega-N-methylarginine. Residues leucine 2197–alanine 2319 are disordered. Over residues serine 2263 to alanine 2288 the composition is skewed to low complexity. Residues serine 2297–glycine 2306 are compositionally biased toward polar residues.

The protein belongs to the NOTCH family. In terms of assembly, heterodimer of a C-terminal fragment N(TM) and a N-terminal fragment N(EC) which are probably linked by disulfide bonds. Interacts with MAML1, MAML2 and MAML3 which act as transcriptional coactivators for NOTCH3. Interacts with PSMA1. Interacts with HIF1AN. In terms of processing, synthesized in the endoplasmic reticulum as an inactive form which is proteolytically cleaved by a furin-like convertase in the trans-Golgi network before it reaches the plasma membrane to yield an active, ligand-accessible form. Cleavage results in a C-terminal fragment N(TM) and a N-terminal fragment N(EC). Following ligand binding, it is cleaved by TNF-alpha converting enzyme (TACE) to yield a membrane-associated intermediate fragment called notch extracellular truncation (NEXT). This fragment is then cleaved by presenilin dependent gamma-secretase to release a notch-derived peptide containing the intracellular domain (NICD) from the membrane. Phosphorylated. Post-translationally, hydroxylated by HIF1AN. As to expression, expressed in postnatal central nervous system (CNS) germinal zones and, in early postnatal life, within numerous cells throughout the CNS. It is more highly localized to ventricular germinal zones.

It localises to the cell membrane. Its subcellular location is the nucleus. Its function is as follows. Functions as a receptor for membrane-bound ligands Jagged1, Jagged2 and Delta1 to regulate cell-fate determination. Upon ligand activation through the released notch intracellular domain (NICD) it forms a transcriptional activator complex with RBPJ/RBPSUH and activates genes of the enhancer of split locus. Affects the implementation of differentiation, proliferation and apoptotic programs. Acts instructively to control the cell fate determination of CNS multipotent progenitor cells, resulting in astroglial induction and neuron/oligodendrocyte suppression. This chain is Neurogenic locus notch homolog protein 3 (Notch3), found in Rattus norvegicus (Rat).